The primary structure comprises 186 residues: MDFYYLPGSAPCRAVQMTAAAVGVELNLKLTDLMKGEHMKPEFLKLNPQHCIPTLVDEDGFVLWESRAIQIYLVEKYCAHDPALAERLYPGDPRRRAVVHQRLFFDVAILYQRFAEYYYPQIFGKKVAGDPDRLRSMEQALEFLNTFLEGERFVAGGDDPTIADFSILACILDCNVRRCRVRSAAI.

The GST N-terminal domain occupies 1 to 81; it reads MDFYYLPGSA…YLVEKYCAHD (81 aa). Glutathione is bound by residues Ser-9, 50-52, and 65-67; these read HCI and ESR. The GST C-terminal domain maps to 92–186; that stretch reads DPRRRAVVHQ…RRCRVRSAAI (95 aa).

It belongs to the GST superfamily. Theta family. As to quaternary structure, homodimer.

The catalysed reaction is RX + glutathione = an S-substituted glutathione + a halide anion + H(+). Its function is as follows. Conjugation of reduced glutathione to a wide number of exogenous and endogenous hydrophobic electrophiles. The chain is Glutathione S-transferase 1, isoform A from Anopheles gambiae (African malaria mosquito).